Reading from the N-terminus, the 451-residue chain is MVCLALVRAAYEHIYLVRKVSHACRCHQHRAWSSKPAASQSAVQGAPGSVLEILGKSYPQDDHTNLTQKVLSKVGRNLHNQKFHPLWLIKERVKEHFYQQYMVRSRTPLFSVYDQLPPVVTTWQNFDSLLIPADHPSRKKGDNYYLNRAHMLRAHTSAHQWDLLHAGLNAFLVVGDVYRRDQIDCQHYPVFHQLEGVRLFSKHELFAGVKDGESLQLFEEGSRSAHKQETHTMEAVKLVEFDLKQVLTRLVTHLFGDGLEVRWVDCYFPFTHPSFEMEINFRGEWLEVLGCGVMEQQLVNSAGAQDRIGWAFGLGLERLAMVLYDIPDIRLFWSEDERFLKQFLLSDINQSVKFQPLSKYPAVFNDISFWLPSENYTENDFYDIVRTVGGDLVEKVDLIDKFEHPKTHRTSHCYRITYRHMERTLSQREVGNVHQAVQEAAVQLLGVEGRF.

Substrate-binding positions include 157–160 (SAHQ), R179, 186–188 (QHY), and 193–195 (QLE). K202 carries the post-translational modification N6-acetyllysine. Residues E287 and F312 each coordinate substrate. An FDX-ACB domain is found at 358–450 (SKYPAVFNDI…AVQLLGVEGR (93 aa)).

The protein belongs to the class-II aminoacyl-tRNA synthetase family. As to quaternary structure, monomer.

The protein localises to the mitochondrion matrix. The protein resides in the mitochondrion. It catalyses the reaction tRNA(Phe) + L-phenylalanine + ATP = L-phenylalanyl-tRNA(Phe) + AMP + diphosphate + H(+). In terms of biological role, is responsible for the charging of tRNA(Phe) with phenylalanine in mitochondrial translation. To a lesser extent, also catalyzes direct attachment of m-Tyr (an oxidized version of Phe) to tRNA(Phe), thereby opening the way for delivery of the misacylated tRNA to the ribosome and incorporation of ROS-damaged amino acid into proteins. The polypeptide is Phenylalanine--tRNA ligase, mitochondrial (Fars2) (Mus musculus (Mouse)).